We begin with the raw amino-acid sequence, 781 residues long: MKKNYYTVLSLSILTALYSTSSQANLQQQCLIGVPHFQGEIVQGDPNELPVYIEADHAKMNQSTHAQYEGNVNVKQGNRHLTAGMIEIEQHGKDNAKRYAYAKNGFDYKDNLIQLNGDNAKIHLDSKDANIQDADYQLVGRQGRGTADEVELREHYRVMKNATFTSCLPNSDAWSIEAKEMRQHIQEEYAEMWHARFKVSGIPIFYTPYLQLPIGDRRRSGLLIPKAGISTRHGYWYAQPFYWNIAPNFDATFTPKYMSHRGWQLNAETRYLTRIGEGKFVVEYLKTDRHSDSLNTARSRHLFYWGHNSHFLKDWRLNVNYTKVSDKHYFNDFESEYGNSTDGYVDQQASISYYQPNYNLSISAKQFQIFDKVDIGPYRALPQIDFNYYRNEIANGLVDFSLFSQVVRFDNDSALMPTAWRFHIEPSLTFPLSNRYGSLNIETKLYATRYLQKRGKGENAEEIKKTVNRVLPQIKLDFQTVLANRQSFIEGYTQTLEPKFQYLYRPYKDQSDIGLKQQNNDYLGFGYDSTLLQQDYFSLFRDRRYSGLDRIVSANQITLGGTTRFYDKNANERFNLSIGQIYYLKDSRTDNNPQNMAQGRSSSWSLESNWRINSKWNWRGSYQYDTHLNQTSLANTVLEYNSEKNNLIQLSYRYVNQSYIDQNLIGKNTYGQSIKQLGMTTAWELTDHWTLVGRYYQDLALKKPVEQYLGIQYNSCCWSIGVGARRYVTNRANQRNDEVLYDNSLSLTFELRGLSPSDHKNNIDEMLKKGKLPYIKAFSLY.

Positions 1–24 (MKKNYYTVLSLSILTALYSTSSQA) are cleaved as a signal peptide.

Belongs to the LptD family. As to quaternary structure, component of the lipopolysaccharide transport and assembly complex. Interacts with LptE and LptA.

It localises to the cell outer membrane. Its function is as follows. Together with LptE, is involved in the assembly of lipopolysaccharide (LPS) at the surface of the outer membrane. The chain is LPS-assembly protein LptD from Histophilus somni (strain 129Pt) (Haemophilus somnus).